We begin with the raw amino-acid sequence, 266 residues long: Phosphate import ATP-binding protein PstB 1 (266 aa).

The ABC transporter domain occupies 21-261 (ISTQDLSVFY…PKGEITEDYI (241 aa)). 54–61 (GGSGSGKS) contacts ATP.

Belongs to the ABC transporter superfamily. Phosphate importer (TC 3.A.1.7) family. In terms of assembly, the complex is composed of two ATP-binding proteins (PstB), two transmembrane proteins (PstC and PstA) and a solute-binding protein (PstS).

It localises to the cell membrane. It catalyses the reaction phosphate(out) + ATP + H2O = ADP + 2 phosphate(in) + H(+). Part of the ABC transporter complex PstSACB involved in phosphate import. Responsible for energy coupling to the transport system. The protein is Phosphate import ATP-binding protein PstB 1 of Lactobacillus johnsonii (strain CNCM I-12250 / La1 / NCC 533).